The primary structure comprises 633 residues: 1-deoxy-D-xylulose-5-phosphate synthase (633 aa).

Thiamine diphosphate is bound by residues His-72 and Gly-113–Ser-115. Residue Asp-144 coordinates Mg(2+). Thiamine diphosphate contacts are provided by residues Gly-145–Ala-146, Asn-173, Tyr-284, and Glu-367. Position 173 (Asn-173) interacts with Mg(2+).

This sequence belongs to the transketolase family. DXPS subfamily. In terms of assembly, homodimer. Requires Mg(2+) as cofactor. Thiamine diphosphate is required as a cofactor.

It carries out the reaction D-glyceraldehyde 3-phosphate + pyruvate + H(+) = 1-deoxy-D-xylulose 5-phosphate + CO2. It functions in the pathway metabolic intermediate biosynthesis; 1-deoxy-D-xylulose 5-phosphate biosynthesis; 1-deoxy-D-xylulose 5-phosphate from D-glyceraldehyde 3-phosphate and pyruvate: step 1/1. In terms of biological role, catalyzes the acyloin condensation reaction between C atoms 2 and 3 of pyruvate and glyceraldehyde 3-phosphate to yield 1-deoxy-D-xylulose-5-phosphate (DXP). The protein is 1-deoxy-D-xylulose-5-phosphate synthase of Bacillus licheniformis (strain ATCC 14580 / DSM 13 / JCM 2505 / CCUG 7422 / NBRC 12200 / NCIMB 9375 / NCTC 10341 / NRRL NRS-1264 / Gibson 46).